The chain runs to 327 residues: MRPLSLKGHERALTRVRFNREGDLTFSCAKDKKPCVWYTENGERIGSYDGHNGAVWDIDVSWDTTKCVTASGDLTVKIWDAELGNCLYTINHQTPMKSCGFSYSGNLVCFTTQKMTKNLSTFQVRDLRDSSQMVEGGESFFYSQFDVNATTALFTQMDDLVTIGFESGLLQQYDLRNPDTPIHTNESVHRYSVQDLQLSPRGDFLISASRDKTAALLDVNDLKKLKQYKSERPVNSACISPNRDHICLGGGEDAMQVTQTSVSAGHFEAKIYHMVFEEEFARFKGHFGPINTMAWHPSGTIIATGGEDGYIRIQEFDEDYLGFTYDF.

5 WD repeats span residues 8–49 (GHER…GSYD), 51–89 (HNGA…CLYT), 188–227 (VHRY…KLKQ), 229–268 (KSER…GHFE), and 285–324 (GHFG…LGFT).

This sequence belongs to the eIF-3 subunit I family. As to quaternary structure, component of the eukaryotic translation initiation factor 3 (eIF-3) complex.

The protein resides in the cytoplasm. Functionally, component of the eukaryotic translation initiation factor 3 (eIF-3) complex, which is involved in protein synthesis of a specialized repertoire of mRNAs and, together with other initiation factors, stimulates binding of mRNA and methionyl-tRNAi to the 40S ribosome. The eIF-3 complex specifically targets and initiates translation of a subset of mRNAs involved in cell proliferation. This Caenorhabditis elegans protein is Eukaryotic translation initiation factor 3 subunit I.